The sequence spans 277 residues: Inositol monophosphatase 1 (277 aa).

Mg(2+)-binding residues include Glu-70, Asp-90, Ile-92, and Asp-93. Glu-70 is a substrate binding site. 92–95 (IDGT) lines the substrate pocket. Phosphothreonine is present on Thr-168. Residues 194 to 196 (GTA), Glu-213, and Asp-220 contribute to the substrate site. Residue Asp-220 participates in Mg(2+) binding.

The protein belongs to the inositol monophosphatase superfamily. As to quaternary structure, homodimer. Mg(2+) serves as cofactor.

The protein resides in the cytoplasm. The enzyme catalyses a myo-inositol phosphate + H2O = myo-inositol + phosphate. It carries out the reaction 1D-myo-inositol 1-phosphate + H2O = myo-inositol + phosphate. The catalysed reaction is 1D-myo-inositol 2-phosphate + H2O = myo-inositol + phosphate. It catalyses the reaction 1D-myo-inositol 3-phosphate + H2O = myo-inositol + phosphate. The enzyme catalyses 1D-myo-inositol 4-phosphate + H2O = myo-inositol + phosphate. It carries out the reaction 1D-myo-inositol 5-phosphate + H2O = myo-inositol + phosphate. The catalysed reaction is 1D-myo-inositol 6-phosphate + H2O = myo-inositol + phosphate. It catalyses the reaction scyllo-inositol 1-phosphate + H2O = scyllo-inositol + phosphate. The enzyme catalyses alpha-D-galactose 1-phosphate + H2O = D-galactose + phosphate. It carries out the reaction alpha-D-glucose 1-phosphate + H2O = D-glucose + phosphate. The catalysed reaction is D-glucose 6-phosphate + H2O = D-glucose + phosphate. It catalyses the reaction beta-D-fructose 1-phosphate + H2O = D-fructose + phosphate. The enzyme catalyses glycerol 2-phosphate + H2O = glycerol + phosphate. It carries out the reaction adenosine 2'-phosphate + H2O = adenosine + phosphate. It functions in the pathway polyol metabolism; myo-inositol biosynthesis; myo-inositol from D-glucose 6-phosphate: step 2/2. Activity with myo-inositol monophosphates and D-galactose 1-phosphate is inhibited by Li(+), Ca(2+) and Mn(2+), but also by Mg(2+) at concentrations above 3 mM. Its function is as follows. Phosphatase involved in the dephosphorylation of myo-inositol monophosphates to generate myo-inositol. Is also able to dephosphorylate scyllo-inositol-phosphate, myo-inositol 1,4-diphosphate, scyllo-inositol-1,3-diphosphate and scyllo-inositol-1,4-diphosphate. Also dephosphorylates in vitro other sugar-phosphates including D-galactose-1-phosphate, glucose-1-phosphate, glucose-6-phosphate, fructose-1-phosphate, beta-glycerophosphate and 2'-AMP. Responsible for the provision of inositol required for synthesis of phosphatidylinositols and polyphosphoinositides, and involved in maintaining normal brain function. Has been implicated as the pharmacological target for lithium (Li(+)) action in brain, which is used to treat bipolar affective disorder. Is equally active with 1D-myo-inositol 1-phosphate, 1D-myo-inositol 3-phosphate and D-galactose 1-phosphate. This chain is Inositol monophosphatase 1, found in Homo sapiens (Human).